A 208-amino-acid polypeptide reads, in one-letter code: MSSGTNKIVESIKSEAQEKADKIIQDAQAEIATINSDAEKTAEAEKNKILDNGKKQSDMKYQQIISEAKMNARRAELGAKEEVIEAAFAKATEDLKAKASSDDAEYSESLIKMIEEATEELGGGDLIVQVKESDVAKVEGHLKKLSADLATKTGVSTTLVLGEPIDAIGGAILKTRNGDIEVNNTIESRLDRFKGLLRSEVANVLFKN.

Residues 37-57 (DAEKTAEAEKNKILDNGKKQS) are disordered.

This sequence belongs to the V-ATPase E subunit family. Has multiple subunits with at least A(3), B(3), C, D, E, F, H, I and proteolipid K(x).

It is found in the cell membrane. Its function is as follows. Component of the A-type ATP synthase that produces ATP from ADP in the presence of a proton gradient across the membrane. The protein is A-type ATP synthase subunit E of Methanobrevibacter smithii (strain ATCC 35061 / DSM 861 / OCM 144 / PS).